We begin with the raw amino-acid sequence, 268 residues long: Orotidine 5'-phosphate decarboxylase (268 aa).

Substrate-binding positions include aspartate 38, 60 to 62 (KTH), 92 to 101 (DRKFADIGNT), tyrosine 218, and arginine 236. Lysine 94 functions as the Proton donor in the catalytic mechanism.

Belongs to the OMP decarboxylase family.

It carries out the reaction orotidine 5'-phosphate + H(+) = UMP + CO2. It functions in the pathway pyrimidine metabolism; UMP biosynthesis via de novo pathway; UMP from orotate: step 2/2. The protein is Orotidine 5'-phosphate decarboxylase (URA3) of Candida parapsilosis (Yeast).